The chain runs to 369 residues: Phospho-N-acetylmuramoyl-pentapeptide-transferase (369 aa).

10 consecutive transmembrane segments (helical) span residues 30–50, 73–93, 99–119, 140–160, 171–191, 202–222, 239–259, 266–286, 291–311, and 346–366; these read AAAI…IGYL, LPTM…LLWA, YVWL…IDDY, VSLG…SVLL, LMID…TAVS, GLAA…AYLT, GGEV…FLWF, IFMG…IALL, LLLP…SLQV, and KIVI…LMTL.

This sequence belongs to the glycosyltransferase 4 family. MraY subfamily. Mg(2+) is required as a cofactor.

It localises to the cell inner membrane. The enzyme catalyses UDP-N-acetyl-alpha-D-muramoyl-L-alanyl-gamma-D-glutamyl-meso-2,6-diaminopimeloyl-D-alanyl-D-alanine + di-trans,octa-cis-undecaprenyl phosphate = di-trans,octa-cis-undecaprenyl diphospho-N-acetyl-alpha-D-muramoyl-L-alanyl-D-glutamyl-meso-2,6-diaminopimeloyl-D-alanyl-D-alanine + UMP. It participates in cell wall biogenesis; peptidoglycan biosynthesis. Functionally, catalyzes the initial step of the lipid cycle reactions in the biosynthesis of the cell wall peptidoglycan: transfers peptidoglycan precursor phospho-MurNAc-pentapeptide from UDP-MurNAc-pentapeptide onto the lipid carrier undecaprenyl phosphate, yielding undecaprenyl-pyrophosphoryl-MurNAc-pentapeptide, known as lipid I. The sequence is that of Phospho-N-acetylmuramoyl-pentapeptide-transferase from Chlorobium phaeobacteroides (strain BS1).